The primary structure comprises 177 residues: MMVVATTKILTAAEYLQREEQATEKSEFIQGEIIPIAGASANHNRLTFNLSRLLPLEIGDRQYEIFVSDMRLWIAESESYFYPDVMVIAEEPKFTDNSQMAVTNPSLIAEVLSTSAAGFDKNQKFGFYRTIPKLQEYLLIDQFCYRVEHYQKVGDRQWLLTELMGENAEIEFSFMKI.

The protein to Synechocystis PCC 6803 slr1290 and sll0925.

This is an uncharacterized protein from Synechocystis sp. (strain ATCC 27184 / PCC 6803 / Kazusa).